Here is a 193-residue protein sequence, read N- to C-terminus: MKDFVRLQSSFLLCTILTLSEQESVSVGCTSSMFWVVAEPTLLGQDHILHSDEASLGTGCPVTNVTAKGYEFNYPATQCGIQKEVFSYVTVFYSALHCNIMHKGVTGKIPLMCIVYGSSLDTTSSTIHNNLTEFQNDPPATNSYSPWNLTNASLFGLTRIPYFQNSSVEASHQSLLLNMSHPLVHESANVAIF.

The N-terminal stretch at 1–22 (MKDFVRLQSSFLLCTILTLSEQ) is a signal peptide. N-linked (GlcNAc...) asparagine glycosylation is found at Asn64, Asn130, Asn148, Asn151, Asn165, and Asn178.

It belongs to the PLAC1 family.

Its subcellular location is the secreted. The sequence is that of Oocyte-secreted protein 3 from Homo sapiens (Human).